We begin with the raw amino-acid sequence, 334 residues long: Holliday junction branch migration complex subunit RuvB (334 aa).

The segment at A4–Y184 is large ATPase domain (RuvB-L). Residues I23, R24, G65, K68, T69, T70, E131–Y133, R174, Y184, and R221 contribute to the ATP site. T69 is a binding site for Mg(2+). The interval R185 to S255 is small ATPAse domain (RuvB-S). The segment at S258 to G334 is head domain (RuvB-H). Positions 294, 313, and 318 each coordinate DNA.

This sequence belongs to the RuvB family. As to quaternary structure, homohexamer. Forms an RuvA(8)-RuvB(12)-Holliday junction (HJ) complex. HJ DNA is sandwiched between 2 RuvA tetramers; dsDNA enters through RuvA and exits via RuvB. An RuvB hexamer assembles on each DNA strand where it exits the tetramer. Each RuvB hexamer is contacted by two RuvA subunits (via domain III) on 2 adjacent RuvB subunits; this complex drives branch migration. In the full resolvosome a probable DNA-RuvA(4)-RuvB(12)-RuvC(2) complex forms which resolves the HJ.

It localises to the cytoplasm. It catalyses the reaction ATP + H2O = ADP + phosphate + H(+). The RuvA-RuvB-RuvC complex processes Holliday junction (HJ) DNA during genetic recombination and DNA repair, while the RuvA-RuvB complex plays an important role in the rescue of blocked DNA replication forks via replication fork reversal (RFR). RuvA specifically binds to HJ cruciform DNA, conferring on it an open structure. The RuvB hexamer acts as an ATP-dependent pump, pulling dsDNA into and through the RuvAB complex. RuvB forms 2 homohexamers on either side of HJ DNA bound by 1 or 2 RuvA tetramers; 4 subunits per hexamer contact DNA at a time. Coordinated motions by a converter formed by DNA-disengaged RuvB subunits stimulates ATP hydrolysis and nucleotide exchange. Immobilization of the converter enables RuvB to convert the ATP-contained energy into a lever motion, pulling 2 nucleotides of DNA out of the RuvA tetramer per ATP hydrolyzed, thus driving DNA branch migration. The RuvB motors rotate together with the DNA substrate, which together with the progressing nucleotide cycle form the mechanistic basis for DNA recombination by continuous HJ branch migration. Branch migration allows RuvC to scan DNA until it finds its consensus sequence, where it cleaves and resolves cruciform DNA. This Erwinia tasmaniensis (strain DSM 17950 / CFBP 7177 / CIP 109463 / NCPPB 4357 / Et1/99) protein is Holliday junction branch migration complex subunit RuvB.